The following is a 206-amino-acid chain: Synaptosomal-associated protein 25 (206 aa).

The segment covering 1-20 has biased composition (basic and acidic residues); that stretch reads MAEDADMRNELEEMQRRADQ. The segment at 1–25 is disordered; sequence MAEDADMRNELEEMQRRADQLADES. An interaction with CENPF region spans residues 1 to 75; it reads MAEDADMRNE…QINKDMKEAE (75 aa). The region spanning 19–81 is the t-SNARE coiled-coil homology 1 domain; that stretch reads DQLADESLES…KEAEKNSTDL (63 aa). Residues cysteine 85, cysteine 88, cysteine 90, and cysteine 92 are each lipidated (S-palmitoyl cysteine). Residues 111-120 form an interaction with ZDHHC17 region; it reads GVVASQPARV. Threonine 138 is modified (phosphothreonine). The 63-residue stretch at 140 to 202 folds into the t-SNARE coiled-coil homology 2 domain; it reads DARENEMDEN…DEANQRATKM (63 aa). 2 positions are modified to phosphoserine: serine 154 and serine 187.

It belongs to the SNAP-25 family. In terms of assembly, part of the SNARE core complex containing SNAP25, VAMP2 and STX1A; this complex binds CPLX1. Found in a complex containing SYT1, SV2B and syntaxin-1. Found in a ternary complex with STX1A and VAMP8. Interacts with HSC70 and with SYT9, forming a complex with DNAJC5. The interaction with SYT9 is inhibited in presence of calcium. Isoform 1 and isoform 2 interact with BLOC1S6. Interacts with CENPF. Interacts with EQTN. Interacts with HGS. Interacts with KCNB1 (via N-terminus); reduces the voltage-dependent potassium channel KCNB1 activity in pancreatic beta cells. Interacts with OTOF. Interacts with RIMS1. Interacts with SNAPIN. Interacts with STXBP6. Interacts with TRIM9. Interacts with ZDHHC13 (via ANK repeats). Interacts with ZDHHC17 (via ANK repeats). Associates with the BLOC-1 complex. Interacts with PLCL1 (via C2 domain). Interacts with PRRT2; this interaction may impair the formation of the SNARE complex. Interacts with alpha-synuclein/SNCA. Interacts with PRPH2. Interacts with ROM1. Interacts with STX3. In terms of processing, palmitoylated. Cys-85 appears to be the main site, and palmitoylation is required for membrane association.

The protein resides in the cytoplasm. Its subcellular location is the perinuclear region. The protein localises to the cell membrane. It is found in the synapse. It localises to the synaptosome. The protein resides in the photoreceptor inner segment. In terms of biological role, t-SNARE involved in the molecular regulation of neurotransmitter release. May play an important role in the synaptic function of specific neuronal systems. Associates with proteins involved in vesicle docking and membrane fusion. Regulates plasma membrane recycling through its interaction with CENPF. Modulates the gating characteristics of the delayed rectifier voltage-dependent potassium channel KCNB1 in pancreatic beta cells. The sequence is that of Synaptosomal-associated protein 25 (SNAP25) from Pongo abelii (Sumatran orangutan).